The primary structure comprises 31 residues: Cyclotide psybry B (31 aa).

A cross-link (cyclopeptide (Gly-Asn)) is located at residues Gly1 to Asn31. 3 cysteine pairs are disulfide-bonded: Cys5–Cys20, Cys9–Cys22, and Cys15–Cys28.

Post-translationally, this is a cyclic peptide.

Functionally, probably participates in a plant defense mechanism. The protein is Cyclotide psybry B of Psychotria brachyceras.